Consider the following 326-residue polypeptide: Glutaminase 2 (326 aa).

Substrate-binding residues include Ser73, Asn125, Glu169, Asn176, Tyr200, Tyr252, and Val270.

Belongs to the glutaminase family. In terms of assembly, homotetramer.

The catalysed reaction is L-glutamine + H2O = L-glutamate + NH4(+). The sequence is that of Glutaminase 2 from Bacillus cereus (strain ATCC 14579 / DSM 31 / CCUG 7414 / JCM 2152 / NBRC 15305 / NCIMB 9373 / NCTC 2599 / NRRL B-3711).